A 416-amino-acid polypeptide reads, in one-letter code: FBD-associated F-box protein At3g52670 (416 aa).

One can recognise an F-box domain in the interval 9 to 62 (EDRMNQLPEDLILRILSFLPTELVIATSVLSKQWRSLWKLVPNLEFDSDDYESE). An FBD domain is found at 327-378 (KWNEPKYVPECLLSHLETFVWIRYDWEREEEKEVATYILRNARWLKKGTIST).

This chain is FBD-associated F-box protein At3g52670, found in Arabidopsis thaliana (Mouse-ear cress).